The primary structure comprises 245 residues: UDP-N-acetyl-D-mannosaminuronic acid transferase (245 aa).

Belongs to the glycosyltransferase 26 family.

It carries out the reaction UDP-N-acetyl-alpha-D-mannosaminouronate + N-acetyl-alpha-D-glucosaminyl-di-trans,octa-cis-undecaprenyl diphosphate = beta-D-ManNAcA-(1-&gt;4)-alpha-D-GlcNAc-di-trans,octa-cis-undecaprenyl diphosphate + UDP + H(+). It participates in bacterial outer membrane biogenesis; enterobacterial common antigen biosynthesis. Functionally, catalyzes the synthesis of Und-PP-GlcNAc-ManNAcA (Lipid II), the second lipid-linked intermediate involved in enterobacterial common antigen (ECA) synthesis. The chain is UDP-N-acetyl-D-mannosaminuronic acid transferase from Photorhabdus laumondii subsp. laumondii (strain DSM 15139 / CIP 105565 / TT01) (Photorhabdus luminescens subsp. laumondii).